The chain runs to 977 residues: Disks large-associated protein 3 (977 aa).

Over residues M1–S10 the composition is skewed to basic and acidic residues. Disordered regions lie at residues M1–D24, A52–G96, F137–S167, A181–A289, A398–A417, and P529–G582. A compositionally biased stretch (low complexity) spans G53–G73. Residue S58 is modified to Phosphoserine. Positions P74–S87 are enriched in gly residues. The segment covering P189–G201 has biased composition (basic and acidic residues). The segment covering S221 to D245 has biased composition (basic residues). Low complexity predominate over residues G258–G271. Phosphoserine occurs at positions 404, 407, 410, and 414. A compositionally biased stretch (pro residues) spans A538–Q547. Phosphoserine is present on residues S641 and S643. 2 disordered regions span residues E739–P788 and E906–Q939. Basic and acidic residues-rich tracts occupy residues G767–S777 and P925–Q939. 3 positions are modified to phosphoserine: S930, S933, and S965.

The protein belongs to the SAPAP family. In terms of assembly, interacts with DLG4/PSD-95. As to expression, highly expressed in central and peripherical nervous system (at protein level).

Its subcellular location is the cell membrane. The protein resides in the postsynaptic density. It is found in the synapse. Functionally, may play a role in the molecular organization of synapses and neuronal cell signaling. Could be an adapter protein linking ion channel to the subsynaptic cytoskeleton. May induce enrichment of PSD-95/SAP90 at the plasma membrane. This Mus musculus (Mouse) protein is Disks large-associated protein 3 (Dlgap3).